We begin with the raw amino-acid sequence, 528 residues long: Peptide chain release factor 3 (528 aa).

One can recognise a tr-type G domain in the interval 9-280 (RRRRTFAIIS…LKLAPAPAPR (272 aa)). GTP-binding positions include 18-25 (SHPDAGKT), 86-90 (DTPGH), and 140-143 (NKLD).

The protein belongs to the TRAFAC class translation factor GTPase superfamily. Classic translation factor GTPase family. PrfC subfamily.

Its subcellular location is the cytoplasm. Its function is as follows. Increases the formation of ribosomal termination complexes and stimulates activities of RF-1 and RF-2. It binds guanine nucleotides and has strong preference for UGA stop codons. It may interact directly with the ribosome. The stimulation of RF-1 and RF-2 is significantly reduced by GTP and GDP, but not by GMP. This chain is Peptide chain release factor 3, found in Symbiobacterium thermophilum (strain DSM 24528 / JCM 14929 / IAM 14863 / T).